The primary structure comprises 246 residues: Peptide methionine sulfoxide reductase (246 aa).

Cysteine 48 (cysteine sulfenic acid (-SOH) intermediate) is an active-site residue. Cysteine 48 and cysteine 246 are disulfide-bonded.

In terms of processing, conjugated to URM1, a ubiquitin-like protein.

The enzyme catalyses L-methionyl-[protein] + [thioredoxin]-disulfide + H2O = L-methionyl-(S)-S-oxide-[protein] + [thioredoxin]-dithiol. It carries out the reaction [thioredoxin]-disulfide + L-methionine + H2O = L-methionine (S)-S-oxide + [thioredoxin]-dithiol. In terms of biological role, has an important function as a repair enzyme for proteins that have been inactivated by oxidation. Catalyzes the reduction of methionine sulfoxide in proteins to methionine. Does not catalyze the reverse reaction involving the oxidation of methionine residues. In Drosophila melanogaster (Fruit fly), this protein is Peptide methionine sulfoxide reductase.